A 122-amino-acid polypeptide reads, in one-letter code: Immunoglobulin lambda variable 8-61 (122 aa).

The N-terminal stretch at 1-24 is a signal peptide; that stretch reads MSVPTMAWMMLLLGLLAYGSGVDS. Residues 25–49 are framework-1; that stretch reads QTVVTQEPSFSVSPGGTVTLTCGLS. The Ig-like domain maps to 25 to 122; it reads QTVVTQEPSF…YCVLYMGSGI (98 aa). Cysteine 46 and cysteine 114 are disulfide-bonded. Residues 50–58 are complementarity-determining-1; it reads SGSVSTSYY. Positions 59 to 75 are framework-2; that stretch reads PSWYQQTPGQAPRTLIY. The complementarity-determining-2 stretch occupies residues 76-78; sequence STN. The segment at 79–114 is framework-3; it reads TRSSGVPDRFSGSILGNKAALTITGAQADDESDYYC. The complementarity-determining-3 stretch occupies residues 115 to 122; sequence VLYMGSGI.

Immunoglobulins are composed of two identical heavy chains and two identical light chains; disulfide-linked.

It localises to the secreted. Its subcellular location is the cell membrane. Its function is as follows. V region of the variable domain of immunoglobulin light chains that participates in the antigen recognition. Immunoglobulins, also known as antibodies, are membrane-bound or secreted glycoproteins produced by B lymphocytes. In the recognition phase of humoral immunity, the membrane-bound immunoglobulins serve as receptors which, upon binding of a specific antigen, trigger the clonal expansion and differentiation of B lymphocytes into immunoglobulins-secreting plasma cells. Secreted immunoglobulins mediate the effector phase of humoral immunity, which results in the elimination of bound antigens. The antigen binding site is formed by the variable domain of one heavy chain, together with that of its associated light chain. Thus, each immunoglobulin has two antigen binding sites with remarkable affinity for a particular antigen. The variable domains are assembled by a process called V-(D)-J rearrangement and can then be subjected to somatic hypermutations which, after exposure to antigen and selection, allow affinity maturation for a particular antigen. This chain is Immunoglobulin lambda variable 8-61, found in Homo sapiens (Human).